A 438-amino-acid polypeptide reads, in one-letter code: Transmembrane protein 184C (438 aa).

The next 7 membrane-spanning stretches (helical) occupy residues 17–37, 48–68, 86–106, 179–199, 212–232, 254–274, and 287–307; these read LVAV…VWEL, AWFI…WVIL, ILWM…YPGI, YTVV…LGIY, YLVI…LLFY, VVFV…VGVI, and AVAT…AAIA. The segment at 355 to 438 is disordered; the sequence is RGHPRKKLFP…KEPSDKSVDS (84 aa). Low complexity-rich tracts occupy residues 374-390 and 404-413; these read SLLS…ASSM and TVTPQTTPTT. Ser422 carries the post-translational modification Phosphoserine. Positions 425-438 are enriched in basic and acidic residues; that stretch reads IGEKKEPSDKSVDS.

Belongs to the TMEM184 family. In terms of tissue distribution, widely expressed with higher expression in lung, kidney, spleen, pancreas, thymus, prostate, testis, ovary, small intestine and thyroid.

Its subcellular location is the membrane. Possible tumor suppressor which may play a role in cell growth. The protein is Transmembrane protein 184C (TMEM184C) of Homo sapiens (Human).